We begin with the raw amino-acid sequence, 256 residues long: Acidic leucine-rich nuclear phosphoprotein 32 family member E (256 aa).

3 LRR repeats span residues Glu-43–Ser-64, Lys-65–Cys-87, and Asn-89–Gln-110. Residues Cys-123 to Asp-161 form the LRRCT domain. The tract at residues Gly-147–Asp-256 is disordered. 2 stretches are compositionally biased toward acidic residues: residues Phe-148–Val-205 and Ile-215–Ala-235. The ZID domain stretch occupies residues Glu-204–Asp-256. Over residues Glu-236 to Pro-247 the composition is skewed to basic and acidic residues.

It belongs to the ANP32 family. In terms of assembly, component of a SWR1-like complex. Interacts with H2A.Z/H2AZ1.

It localises to the cytoplasm. The protein resides in the nucleus. Its function is as follows. Histone chaperone that specifically mediates the genome-wide removal of histone H2A.Z/H2AZ1 from the nucleosome: removes H2A.Z/H2AZ1 from its normal sites of deposition, especially from enhancer and insulator regions. Not involved in deposition of H2A.Z/H2AZ1 in the nucleosome. May stabilize the evicted H2A.Z/H2AZ1-H2B dimer, thus shifting the equilibrium towards dissociation and the off-chromatin state. Inhibits activity of protein phosphatase 2A (PP2A). Does not inhibit protein phosphatase 1. May play a role in cerebellar development and synaptogenesis. The polypeptide is Acidic leucine-rich nuclear phosphoprotein 32 family member E (ANP32E) (Gallus gallus (Chicken)).